A 484-amino-acid polypeptide reads, in one-letter code: Protein nucleotidyltransferase YdiU (484 aa).

Residues Gly-87, Gly-89, Arg-90, Lys-110, Asp-122, Gly-123, Arg-173, and Arg-180 each contribute to the ATP site. Asp-249 serves as the catalytic Proton acceptor. 2 residues coordinate Mg(2+): Asn-250 and Asp-259. Position 259 (Asp-259) interacts with ATP.

It belongs to the SELO family. Requires Mg(2+) as cofactor. The cofactor is Mn(2+).

The catalysed reaction is L-seryl-[protein] + ATP = 3-O-(5'-adenylyl)-L-seryl-[protein] + diphosphate. The enzyme catalyses L-threonyl-[protein] + ATP = 3-O-(5'-adenylyl)-L-threonyl-[protein] + diphosphate. It catalyses the reaction L-tyrosyl-[protein] + ATP = O-(5'-adenylyl)-L-tyrosyl-[protein] + diphosphate. It carries out the reaction L-histidyl-[protein] + UTP = N(tele)-(5'-uridylyl)-L-histidyl-[protein] + diphosphate. The catalysed reaction is L-seryl-[protein] + UTP = O-(5'-uridylyl)-L-seryl-[protein] + diphosphate. The enzyme catalyses L-tyrosyl-[protein] + UTP = O-(5'-uridylyl)-L-tyrosyl-[protein] + diphosphate. In terms of biological role, nucleotidyltransferase involved in the post-translational modification of proteins. It can catalyze the addition of adenosine monophosphate (AMP) or uridine monophosphate (UMP) to a protein, resulting in modifications known as AMPylation and UMPylation. This Lachnoclostridium phytofermentans (strain ATCC 700394 / DSM 18823 / ISDg) (Clostridium phytofermentans) protein is Protein nucleotidyltransferase YdiU.